The primary structure comprises 84 residues: Sulfur carrier protein TusA (84 aa).

The Cysteine persulfide intermediate role is filled by Cys21.

The protein belongs to the sulfur carrier protein TusA family.

It localises to the cytoplasm. Functionally, sulfur carrier protein which probably makes part of a sulfur-relay system. In Pseudomonas syringae pv. tomato (strain ATCC BAA-871 / DC3000), this protein is Sulfur carrier protein TusA.